Here is a 288-residue protein sequence, read N- to C-terminus: Light-independent protochlorophyllide reductase iron-sulfur ATP-binding protein (288 aa).

Residues 12-17 and Lys41 contribute to the ATP site; that span reads GIGKST. Position 16 (Ser16) interacts with Mg(2+). The [4Fe-4S] cluster site is built by Cys97 and Cys131. An ATP-binding site is contributed by 182–183; the sequence is NR.

It belongs to the NifH/BchL/ChlL family. As to quaternary structure, homodimer. Protochlorophyllide reductase is composed of three subunits; ChlL, ChlN and ChlB. The cofactor is [4Fe-4S] cluster.

The catalysed reaction is chlorophyllide a + oxidized 2[4Fe-4S]-[ferredoxin] + 2 ADP + 2 phosphate = protochlorophyllide a + reduced 2[4Fe-4S]-[ferredoxin] + 2 ATP + 2 H2O. It functions in the pathway porphyrin-containing compound metabolism; chlorophyll biosynthesis (light-independent). Its function is as follows. Component of the dark-operative protochlorophyllide reductase (DPOR) that uses Mg-ATP and reduced ferredoxin to reduce ring D of protochlorophyllide (Pchlide) to form chlorophyllide a (Chlide). This reaction is light-independent. The L component serves as a unique electron donor to the NB-component of the complex, and binds Mg-ATP. This chain is Light-independent protochlorophyllide reductase iron-sulfur ATP-binding protein, found in Synechocystis sp. (strain ATCC 27184 / PCC 6803 / Kazusa).